We begin with the raw amino-acid sequence, 492 residues long: MRGLGPSLRARRLLPLRYPPRPPGPRGPRLCSGLTASAMDELLRRAVPPTPAYELREKTPAPAEGQCADFVSFYGGLAEAAQRAELLGRLAQGFGVDHGQVAEQSAGVLQLRQQSREAAVLLQAEDRLRYALVPRYRGLFHHISKLDGGVRFLVQLRADLLEAQALKLVEGPHVREMNGVLKSMLSEWFSSGFLNLERVTWHSPCEVLQKISECEAVHPVKNWMDMKRRVGPYRRCYFFSHCSTPGDPLVVLHVALTGDISNNIQSIVKECPPSETEEKNRIAAAVFYSISLTQQGLQGVELGTFLIKRVVKELQKEFPHLGAFSSLSPIPGFTKWLLGLLNVQGKEYGRNELFTDSECKEIAEVTGDPVHESLKGLLSSGEWAKSEKLAQALQGPLMRLCAWYLYGEKHRGYALNPVANFHLQNGAVMWRINWMADSSLKGLTSSCGLMVNYRYYLEETGPNSISYLGSKNIKASEQILSLVAQFQSNSKL.

The N-terminal 38 residues, 1 to 38 (MRGLGPSLRARRLLPLRYPPRPPGPRGPRLCSGLTASA), are a transit peptide targeting the mitochondrion. The segment at 39-189 (MDELLRRAVP…VLKSMLSEWF (151 aa)) is alpha-helical domain. At K58 the chain carries N6-acetyllysine. At K167 the chain carries N6-acetyllysine; alternate. K167 carries the N6-succinyllysine; alternate modification. The catalytic domain stretch occupies residues 190-492 (SSGFLNLERV…VAQFQSNSKL (303 aa)). An N6-acetyllysine modification is found at K210. K221 bears the N6-succinyllysine mark. 298–304 (QGVELGT) lines the malonyl-CoA pocket. An N6-acetyllysine modification is found at K316. S328 lines the malonyl-CoA pocket. S328 serves as the catalytic Proton acceptor. K385 carries the N6-acetyllysine; alternate modification. K385 is modified (N6-succinyllysine; alternate). At K388 the chain carries N6-acetyllysine. Position 422 (H422) interacts with malonyl-CoA. Residue H422 is the Proton donor of the active site. N6-acetyllysine is present on residues K441 and K471. Positions 490–492 (SKL) match the Microbody targeting signal motif.

In terms of assembly, homotetramer. Dimer of dimers. The two subunits within a dimer display conformational differences suggesting that at any given moment, only one of the two subunits is competent for malonyl-CoA binding and catalytic activity. Under oxidizing conditions, can form disulfide-linked homotetramers (in vitro). Associates with the peroxisomal targeting signal receptor PEX5. In terms of processing, acetylation at Lys-471 activates malonyl-CoA decarboxylase activity. Deacetylation at Lys-471 by SIRT4 represses activity, leading to promote lipogenesis. Post-translationally, interchain disulfide bonds may form in peroxisomes (Potential). Interchain disulfide bonds are not expected to form in the reducing environment of the cytoplasm and mitochondria. Expressed in liver, heart, skeletal muscles and adipose tissues (at protein level). Ubiquitous. Strongly expressed in liver, kidney, heart, skeletal muscle and adipose tissues. Weakly expressed in brain.

The protein resides in the cytoplasm. It is found in the mitochondrion matrix. It localises to the peroxisome. The protein localises to the peroxisome matrix. The enzyme catalyses malonyl-CoA + H(+) = acetyl-CoA + CO2. Its pathway is metabolic intermediate biosynthesis; acetyl-CoA biosynthesis; acetyl-CoA from malonyl-CoA: step 1/1. Its activity is regulated as follows. Malonyl-CoA decarboxylase activity does not require any cofactors or divalent metal ions. Its function is as follows. Catalyzes the conversion of malonyl-CoA to acetyl-CoA. In the fatty acid biosynthesis MCD selectively removes malonyl-CoA and thus assures that methyl-malonyl-CoA is the only chain elongating substrate for fatty acid synthase and that fatty acids with multiple methyl side chains are produced. In peroxisomes it may be involved in degrading intraperoxisomal malonyl-CoA, which is generated by the peroxisomal beta-oxidation of odd chain-length dicarboxylic fatty acids. Plays a role in the metabolic balance between glucose and lipid oxidation in muscle independent of alterations in insulin signaling. May play a role in controlling the extent of ischemic injury by promoting glucose oxidation. This is Malonyl-CoA decarboxylase, mitochondrial from Rattus norvegicus (Rat).